The sequence spans 140 residues: Lymphocyte antigen 6H (140 aa).

Residues 1–25 form the signal peptide; that stretch reads MLPAAMKGLGLVLLAALLCSSPAHG. In terms of domain architecture, UPAR/Ly6 spans 26-91; sequence LWCQDCTLTT…RHFFSDYLMG (66 aa). Intrachain disulfides connect C28/C52, C31/C40, C45/C73, C77/C104, and C105/C110. An N-linked (GlcNAc...) asparagine glycan is attached at N36.

The protein resides in the cell membrane. The protein is Lymphocyte antigen 6H (LY6H) of Bos taurus (Bovine).